The following is a 308-amino-acid chain: Type II restriction enzyme MamI (308 aa).

It catalyses the reaction Endonucleolytic cleavage of DNA to give specific double-stranded fragments with terminal 5'-phosphates.. Functionally, a P subtype restriction enzyme that recognizes the double-stranded sequence 5'-GATNNNNATC-3' and cleaves after N-5. The chain is Type II restriction enzyme MamI from Microbacterium ammoniaphilum.